The chain runs to 101 residues: MIGLSHYLTVAAILFTLGVLGIFINRKNVIVILMCVELILLAVNINLVAFSTHLGDIVGQVFALFVLTVAAAEAAIGLAILVVFFRNRGSIAVEDVNMMKG.

Helical transmembrane passes span 4–24 (LSHY…GIFI), 30–50 (IVIL…LVAF), and 65–85 (FVLT…VVFF).

It belongs to the complex I subunit 4L family. In terms of assembly, NDH-1 is composed of 14 different subunits. Subunits NuoA, H, J, K, L, M, N constitute the membrane sector of the complex.

The protein localises to the cell inner membrane. It carries out the reaction a quinone + NADH + 5 H(+)(in) = a quinol + NAD(+) + 4 H(+)(out). Its function is as follows. NDH-1 shuttles electrons from NADH, via FMN and iron-sulfur (Fe-S) centers, to quinones in the respiratory chain. The immediate electron acceptor for the enzyme in this species is believed to be ubiquinone. Couples the redox reaction to proton translocation (for every two electrons transferred, four hydrogen ions are translocated across the cytoplasmic membrane), and thus conserves the redox energy in a proton gradient. The protein is NADH-quinone oxidoreductase subunit K of Methylobacterium sp. (strain 4-46).